The following is a 361-amino-acid chain: Tyrosine--tRNA ligase (361 aa).

Tyrosine 36, tyrosine 162, glutamine 166, aspartate 169, and glutamine 184 together coordinate L-tyrosine. A 'KMSKS' region motif is present at residues 236-240; it reads KMSKS. Lysine 239 contributes to the ATP binding site.

It belongs to the class-I aminoacyl-tRNA synthetase family. TyrS type 4 subfamily. Homodimer.

Its subcellular location is the cytoplasm. The enzyme catalyses tRNA(Tyr) + L-tyrosine + ATP = L-tyrosyl-tRNA(Tyr) + AMP + diphosphate + H(+). Its function is as follows. Catalyzes the attachment of tyrosine to tRNA(Tyr) in a two-step reaction: tyrosine is first activated by ATP to form Tyr-AMP and then transferred to the acceptor end of tRNA(Tyr). The chain is Tyrosine--tRNA ligase from Saccharolobus islandicus (strain M.14.25 / Kamchatka #1) (Sulfolobus islandicus).